The sequence spans 333 residues: MRNSCKKARRTRPLKATIQALLVAIATMTFFFTSDIALPQSAAAYPFWAQQTYPETPREPTGRIVCANCHLAAKPAEVEVPQSVLPDTVFKAVVKIPYDTKLQQVAADGSKVGLNVGAVLMLPEGFKIAPEERIPEELKKEVGDVYFQPYKEGQDNVLLVGPLPGEQYQEIVFPVLSPNPTTDKNIHFGKYAIHLGANRGRGQIYPTGEKSNNNVFTASATGTITKIAKEEDEYGNVKYQVSIQTDSGKTVVDTIPAGPELIVSEGQAVKAGEALTNNPNVGGFGQDDTEIVLQDPNRVKWMIAFICLVMLAQLMLILKKKQVEKVQAAEMNF.

The N-terminal stretch at 1–37 is a signal peptide; the sequence is MRNSCKKARRTRPLKATIQALLVAIATMTFFFTSDIA. The Cytoplasmic segment spans residues 38-298; that stretch reads LPQSAAAYPF…TEIVLQDPNR (261 aa). Heme-binding residues include Y45, C66, C69, and H70. A helical membrane pass occupies residues 299-319; sequence VKWMIAFICLVMLAQLMLILK. The Lumenal, thylakoid portion of the chain corresponds to 320–333; it reads KKQVEKVQAAEMNF.

This sequence belongs to the cytochrome f family. In terms of assembly, the 4 large subunits of the cytochrome b6-f complex are cytochrome b6, subunit IV (17 kDa polypeptide, PetD), cytochrome f and the Rieske protein, while the 4 small subunits are PetG, PetL, PetM and PetN. The complex functions as a dimer. Heme is required as a cofactor.

The protein localises to the cellular thylakoid membrane. In terms of biological role, component of the cytochrome b6-f complex, which mediates electron transfer between photosystem II (PSII) and photosystem I (PSI), cyclic electron flow around PSI, and state transitions. The sequence is that of Cytochrome f (petA) from Mastigocladus laminosus (Fischerella sp.).